Consider the following 220-residue polypeptide: MKDIDTLISNNALWSKMLVEEDPGFFEKLAQAQKPRFLWIGCSDSRVPAERLTGLEPGELFVHRNVANLVIHTDLNCLSVVQYAVDVLEVEHIIICGHYGCGGVQAAVENPELGLINNWLLHIRDIWFKHSSLLGEMPQERRLDTLCELNVMEQVYNLGHSTIMQSAWKRGQKVTIHGWAYGIHDGLLRDLDVTATNRETLEQRYRHGISNLKLKHANHK.

Positions 42, 44, 98, and 101 each coordinate Zn(2+).

This sequence belongs to the beta-class carbonic anhydrase family. Homodimer. It depends on Zn(2+) as a cofactor.

The enzyme catalyses hydrogencarbonate + H(+) = CO2 + H2O. The chain is Carbonic anhydrase 2 (can) from Escherichia coli (strain K12).